A 227-amino-acid polypeptide reads, in one-letter code: Isoprenyl transferase (227 aa).

Asp-13 is an active-site residue. Asp-13 contributes to the Mg(2+) binding site. Residues 14 to 17 (GNGR), Trp-18, Arg-26, His-30, and 58 to 60 (STE) contribute to the substrate site. The active-site Proton acceptor is the Asn-61. Residues Trp-62, Arg-64, Arg-175, and 181-183 (RLS) each bind substrate. Glu-194 is a Mg(2+) binding site.

Belongs to the UPP synthase family. In terms of assembly, homodimer. It depends on Mg(2+) as a cofactor.

In terms of biological role, catalyzes the condensation of isopentenyl diphosphate (IPP) with allylic pyrophosphates generating different type of terpenoids. The protein is Isoprenyl transferase of Treponema denticola (strain ATCC 35405 / DSM 14222 / CIP 103919 / JCM 8153 / KCTC 15104).